The following is a 380-amino-acid chain: Shedu protein SduA (380 aa).

In terms of biological role, only component of antiviral defense system Shedu. Expression of Shedu in B.subtilis (strain BEST7003) confers resistance to phages phi105, phi29, rho14 and to a lesser extent to SPP1. May be an endonuclease. This chain is Shedu protein SduA, found in Bacillus cereus (strain B4264).